Here is a 107-residue protein sequence, read N- to C-terminus: Large ribosomal subunit protein bL21 (107 aa).

Belongs to the bacterial ribosomal protein bL21 family. As to quaternary structure, part of the 50S ribosomal subunit. Contacts protein L20.

In terms of biological role, this protein binds to 23S rRNA in the presence of protein L20. This is Large ribosomal subunit protein bL21 from Pseudothermotoga lettingae (strain ATCC BAA-301 / DSM 14385 / NBRC 107922 / TMO) (Thermotoga lettingae).